Here is a 430-residue protein sequence, read N- to C-terminus: Adenylosuccinate synthetase (430 aa).

Residues 13–19 (GDEGKGK) and 41–43 (GHT) contribute to the GTP site. D14 functions as the Proton acceptor in the catalytic mechanism. Mg(2+) is bound by residues D14 and G41. IMP is bound by residues 14 to 17 (DEGK), 39 to 42 (NAGH), T130, R144, Q225, T240, and R304. Catalysis depends on H42, which acts as the Proton donor. Substrate is bound at residue 300 to 306 (ATTGRAR). GTP contacts are provided by residues R306, 332 to 334 (KLD), and 414 to 416 (STG).

It belongs to the adenylosuccinate synthetase family. As to quaternary structure, homodimer. Mg(2+) serves as cofactor.

It localises to the cytoplasm. The enzyme catalyses IMP + L-aspartate + GTP = N(6)-(1,2-dicarboxyethyl)-AMP + GDP + phosphate + 2 H(+). It participates in purine metabolism; AMP biosynthesis via de novo pathway; AMP from IMP: step 1/2. In terms of biological role, plays an important role in the de novo pathway of purine nucleotide biosynthesis. Catalyzes the first committed step in the biosynthesis of AMP from IMP. This is Adenylosuccinate synthetase from Pseudomonas syringae pv. syringae (strain B728a).